Here is a 144-residue protein sequence, read N- to C-terminus: Transcriptional regulator MraZ (144 aa).

2 SpoVT-AbrB domains span residues 4-47 (EYKN…TADK) and 77-120 (AQEI…DLKQ).

This sequence belongs to the MraZ family. Forms oligomers.

The protein resides in the cytoplasm. It is found in the nucleoid. The protein is Transcriptional regulator MraZ of Treponema denticola (strain ATCC 35405 / DSM 14222 / CIP 103919 / JCM 8153 / KCTC 15104).